The primary structure comprises 397 residues: DNA-binding protein (397 aa).

Positions 116 and 118 each coordinate Zn(2+). Positions 129 to 161 (IEMAATSESGVAALKEGRGAVEINRWGRQVVKI) are flexible loop. Zn(2+) contacts are provided by cysteine 169, cysteine 185, cysteine 225, cysteine 227, cysteine 276, and cysteine 289. Residues 335 to 397 (ALLPEGSVNE…IVLESSEEDE (63 aa)) form a C-terminal arm, DBP binding region. The tract at residues 338–397 (PEGSVNEDENPFGLDNSEDEEEVVPPSPPSPARKRTRTTVAEVHHKKKKKIVLESSEEDE) is disordered. The segment covering 342 to 360 (VNEDENPFGLDNSEDEEEV) has biased composition (acidic residues).

This sequence belongs to the adenoviridae E2A DNA-binding protein family. As to quaternary structure, homomultimerizes on viral ssDNA bound to pTP. Forms a initiation complex with viral polymerase, pTP and hosts NFIA and POU2F1/OCT1. Interacts with host SRCAP.

The protein localises to the host nucleus. In terms of biological role, plays a role in the elongation phase of viral strand displacement replication by unwinding the template in an ATP-independent fashion, employing its capacity to form multimers. Also enhances the rate of initiation. Released from template upon second strand synthesis. Assembles in complex with viral pTP, viral pol, host NFIA and host POU2F1/OCT1 on viral origin of replication. Covers the whole ssDNA genome during synthesis. The complementary strand synthesis induces its relese from DNA template. May inhibit cellular transcription mediated by the interaction between host SRCAP and CBP. This Snake adenovirus serotype 1 (SnAdV-1) protein is DNA-binding protein.